Consider the following 86-residue polypeptide: Small ribosomal subunit protein bS16 (86 aa).

Belongs to the bacterial ribosomal protein bS16 family.

The sequence is that of Small ribosomal subunit protein bS16 from Stenotrophomonas maltophilia (strain R551-3).